We begin with the raw amino-acid sequence, 208 residues long: Pyridoxine/pyridoxamine 5'-phosphate oxidase (208 aa).

FMN-binding positions include 55–60 (RMVLLK), 70–71 (YT), lysine 77, and glutamine 99. Lysine 60 contacts substrate. Substrate-binding residues include tyrosine 117, arginine 121, and serine 125. FMN is bound by residues 134–135 (QS) and tryptophan 180. A substrate-binding site is contributed by 186 to 188 (RIH). Arginine 190 serves as a coordination point for FMN.

Belongs to the pyridoxamine 5'-phosphate oxidase family. In terms of assembly, homodimer. The cofactor is FMN.

The catalysed reaction is pyridoxamine 5'-phosphate + O2 + H2O = pyridoxal 5'-phosphate + H2O2 + NH4(+). It carries out the reaction pyridoxine 5'-phosphate + O2 = pyridoxal 5'-phosphate + H2O2. It participates in cofactor metabolism; pyridoxal 5'-phosphate salvage; pyridoxal 5'-phosphate from pyridoxamine 5'-phosphate: step 1/1. The protein operates within cofactor metabolism; pyridoxal 5'-phosphate salvage; pyridoxal 5'-phosphate from pyridoxine 5'-phosphate: step 1/1. Catalyzes the oxidation of either pyridoxine 5'-phosphate (PNP) or pyridoxamine 5'-phosphate (PMP) into pyridoxal 5'-phosphate (PLP). The protein is Pyridoxine/pyridoxamine 5'-phosphate oxidase of Pelagibacter ubique (strain HTCC1062).